Reading from the N-terminus, the 350-residue chain is MPVLHNRISNDELKAKMLAESEPRTTISFYKYFTIASPQQTRDALYQVFTALDVFGRVYLAHEGINAQISVPQSKLETFRQQLYTFDPALDGLRLNIALEDDGKSFWVLRMKVRDRIVADGIDDPTFDASNVGDYLKAADVNAMLDDPDAVFIDMRNHYEYEVGHFENALEIPADTFREQLPKAVEMLREHADKKIVMYCTGGIRCEKASAWMKHNGFNKVWHIEGGIIEYARRAREQGLPVRFIGKNFVFDERMGERISDEVIAHCHQCGAPCDSHTNCKNDGCHLLFIQCPQCASKFNGCCSEQCCEELALPEEEQRRRRAGRENGNKIFNKSRGRLNSKLSIPDPAE.

Residues 146-240 (DDPDAVFIDM…YARRAREQGL (95 aa)) enclose the Rhodanese domain. Cys-200 (cysteine persulfide intermediate) is an active-site residue. Residues 319–328 (RRRRAGRENG) are compositionally biased toward basic and acidic residues. The segment at 319–350 (RRRRAGRENGNKIFNKSRGRLNSKLSIPDPAE) is disordered.

The protein belongs to the TrhO family.

The catalysed reaction is uridine(34) in tRNA + AH2 + O2 = 5-hydroxyuridine(34) in tRNA + A + H2O. Its function is as follows. Catalyzes oxygen-dependent 5-hydroxyuridine (ho5U) modification at position 34 in tRNAs. This is tRNA uridine(34) hydroxylase from Salmonella schwarzengrund (strain CVM19633).